Here is a 310-residue protein sequence, read N- to C-terminus: ADP-L-glycero-D-manno-heptose-6-epimerase (310 aa).

NADP(+) contacts are provided by residues 10 to 11 (FI), 31 to 32 (DN), Lys38, Lys53, 75 to 79 (EGACS), and Asn92. The active-site Proton acceptor is Tyr140. Lys144 lines the NADP(+) pocket. Substrate is bound at residue Asn169. 2 residues coordinate NADP(+): Val170 and Lys178. Lys178 functions as the Proton acceptor in the catalytic mechanism. Substrate-binding positions include Ser180, His187, 201–204 (FEGS), Arg209, and Tyr272.

It belongs to the NAD(P)-dependent epimerase/dehydratase family. HldD subfamily. In terms of assembly, homopentamer. It depends on NADP(+) as a cofactor.

The enzyme catalyses ADP-D-glycero-beta-D-manno-heptose = ADP-L-glycero-beta-D-manno-heptose. Its pathway is nucleotide-sugar biosynthesis; ADP-L-glycero-beta-D-manno-heptose biosynthesis; ADP-L-glycero-beta-D-manno-heptose from D-glycero-beta-D-manno-heptose 7-phosphate: step 4/4. In terms of biological role, catalyzes the interconversion between ADP-D-glycero-beta-D-manno-heptose and ADP-L-glycero-beta-D-manno-heptose via an epimerization at carbon 6 of the heptose. This is ADP-L-glycero-D-manno-heptose-6-epimerase from Salmonella heidelberg (strain SL476).